We begin with the raw amino-acid sequence, 210 residues long: Large ribosomal subunit protein uL4 (210 aa).

The interval 44 to 79 is disordered; the sequence is QHQGTHKVKTRSEVSGGGRKPYRQKGTGNARRGSSR.

Belongs to the universal ribosomal protein uL4 family. As to quaternary structure, part of the 50S ribosomal subunit.

In terms of biological role, one of the primary rRNA binding proteins, this protein initially binds near the 5'-end of the 23S rRNA. It is important during the early stages of 50S assembly. It makes multiple contacts with different domains of the 23S rRNA in the assembled 50S subunit and ribosome. Functionally, forms part of the polypeptide exit tunnel. This Chloroherpeton thalassium (strain ATCC 35110 / GB-78) protein is Large ribosomal subunit protein uL4.